The primary structure comprises 216 residues: UPF0711 protein C18orf21 homolog (216 aa).

2 disordered regions span residues 118–185 (RSFL…ASKT) and 197–216 (SQSESKKNPKMDFRNFLSSL). Residues 124–136 (LKSNPTTPTSKLS) are compositionally biased toward polar residues. The residue at position 126 (serine 126) is a Phosphoserine. 2 positions are modified to phosphothreonine: threonine 130 and threonine 139. Polar residues-rich tracts occupy residues 145-157 (PSSANLNHTSGSK) and 167-182 (TPTSGQSTSICSSKNA). Positions 200 to 209 (ESKKNPKMDF) are enriched in basic and acidic residues.

This sequence belongs to the UPF0711 family.

The sequence is that of UPF0711 protein C18orf21 homolog from Bos taurus (Bovine).